A 286-amino-acid chain; its full sequence is Pantothenate synthetase (286 aa).

An ATP-binding site is contributed by 31–38; that stretch reads MGALHDGH. Catalysis depends on histidine 38, which acts as the Proton donor. Glutamine 62 provides a ligand contact to (R)-pantoate. Glutamine 62 provides a ligand contact to beta-alanine. Position 148–151 (148–151) interacts with ATP; that stretch reads GKKD. Glutamine 154 lines the (R)-pantoate pocket. ATP contacts are provided by residues valine 177 and 185-188; that span reads KSSR.

Belongs to the pantothenate synthetase family. In terms of assembly, homodimer.

It localises to the cytoplasm. It catalyses the reaction (R)-pantoate + beta-alanine + ATP = (R)-pantothenate + AMP + diphosphate + H(+). It functions in the pathway cofactor biosynthesis; (R)-pantothenate biosynthesis; (R)-pantothenate from (R)-pantoate and beta-alanine: step 1/1. Catalyzes the condensation of pantoate with beta-alanine in an ATP-dependent reaction via a pantoyl-adenylate intermediate. The sequence is that of Pantothenate synthetase from Staphylococcus epidermidis (strain ATCC 35984 / DSM 28319 / BCRC 17069 / CCUG 31568 / BM 3577 / RP62A).